Consider the following 138-residue polypeptide: Large ribosomal subunit protein uL16 (138 aa).

Basic residues predominate over residues 1–19; the sequence is MLIPRKVKHRKQHHPKKKG. The segment at 1–24 is disordered; sequence MLIPRKVKHRKQHHPKKKGTASGG.

The protein belongs to the universal ribosomal protein uL16 family. In terms of assembly, part of the 50S ribosomal subunit.

Binds 23S rRNA and is also seen to make contacts with the A and possibly P site tRNAs. The protein is Large ribosomal subunit protein uL16 of Mycobacteroides abscessus (strain ATCC 19977 / DSM 44196 / CCUG 20993 / CIP 104536 / JCM 13569 / NCTC 13031 / TMC 1543 / L948) (Mycobacterium abscessus).